The primary structure comprises 337 residues: tRNA N6-adenosine threonylcarbamoyltransferase (337 aa).

His-111 and His-115 together coordinate Fe cation. Residues 134-138 (LVSGG), Asp-167, Gly-180, and Asn-272 contribute to the substrate site. Asp-300 is a Fe cation binding site.

The protein belongs to the KAE1 / TsaD family. Requires Fe(2+) as cofactor.

It is found in the cytoplasm. The enzyme catalyses L-threonylcarbamoyladenylate + adenosine(37) in tRNA = N(6)-L-threonylcarbamoyladenosine(37) in tRNA + AMP + H(+). Required for the formation of a threonylcarbamoyl group on adenosine at position 37 (t(6)A37) in tRNAs that read codons beginning with adenine. Is involved in the transfer of the threonylcarbamoyl moiety of threonylcarbamoyl-AMP (TC-AMP) to the N6 group of A37, together with TsaE and TsaB. TsaD likely plays a direct catalytic role in this reaction. This Escherichia coli O139:H28 (strain E24377A / ETEC) protein is tRNA N6-adenosine threonylcarbamoyltransferase.